Consider the following 447-residue polypeptide: Argininosuccinate synthase (447 aa).

Residues 17–25 (AFSGGLDTS) and Ala43 each bind ATP. L-citrulline is bound at residue Tyr99. 2 residues coordinate ATP: Gly129 and Thr131. Residues Thr131, Asn135, and Asp136 each contribute to the L-aspartate site. Position 135 (Asn135) interacts with L-citrulline. Residue Asp136 coordinates ATP. Residues Arg139 and Ser192 each coordinate L-citrulline. Asp194 contributes to the ATP binding site. Residues Thr201, Glu203, and Glu280 each coordinate L-citrulline.

The protein belongs to the argininosuccinate synthase family. Type 2 subfamily. In terms of assembly, homotetramer.

The protein resides in the cytoplasm. The catalysed reaction is L-citrulline + L-aspartate + ATP = 2-(N(omega)-L-arginino)succinate + AMP + diphosphate + H(+). It participates in amino-acid biosynthesis; L-arginine biosynthesis; L-arginine from L-ornithine and carbamoyl phosphate: step 2/3. This is Argininosuccinate synthase from Escherichia coli O139:H28 (strain E24377A / ETEC).